Here is a 252-residue protein sequence, read N- to C-terminus: Triosephosphate isomerase (252 aa).

Residue 10–12 (NWK) coordinates substrate. Catalysis depends on H96, which acts as the Electrophile. E168 (proton acceptor) is an active-site residue. Substrate-binding positions include G174, S214, and 235–236 (GG).

It belongs to the triosephosphate isomerase family. In terms of assembly, homodimer.

Its subcellular location is the cytoplasm. The catalysed reaction is D-glyceraldehyde 3-phosphate = dihydroxyacetone phosphate. Its pathway is carbohydrate biosynthesis; gluconeogenesis. The protein operates within carbohydrate degradation; glycolysis; D-glyceraldehyde 3-phosphate from glycerone phosphate: step 1/1. Functionally, involved in the gluconeogenesis. Catalyzes stereospecifically the conversion of dihydroxyacetone phosphate (DHAP) to D-glyceraldehyde-3-phosphate (G3P). The sequence is that of Triosephosphate isomerase from Streptococcus agalactiae serotype Ia (strain ATCC 27591 / A909 / CDC SS700).